Consider the following 473-residue polypeptide: Benzoyl-CoA oxygenase component B (473 aa).

This sequence belongs to the benzoyl-CoA oxygenase component B family. As to quaternary structure, monomer. The subunit composition of the active BoxA/BoxB protein complex is not known. Fe cation serves as cofactor.

The enzyme catalyses benzoyl-CoA + NADPH + O2 + H(+) = 2,3-epoxy-2,3-dihydrobenzoyl-CoA + NADP(+) + H2O. Functionally, the BoxA/BoxB complex catalyzes the aerobic reduction/oxygenation of the aromatic ring of benzoyl-CoA to form 2,3-epoxy-2,3-dihydrobenzoyl-CoA. BoxB acts as the benzoyl-CoA oxygenase, after being reduced by the reductase component BoxA. BoxAB does not act on NADH or benzoate. The sequence is that of Benzoyl-CoA oxygenase component B (boxB) from Aromatoleum evansii (Azoarcus evansii).